A 688-amino-acid chain; its full sequence is MGKVVGIDLGTTNSVVAVMEGGKPVVIANAEGMRTTPSVVGFSKDGERVVGQMARRQTVLNPQNTFFAVKRYIGRRYNELSPESKRVPYTIRKDEVGNIKVACPRLNKEFSAEEISAMVLKKLADDASAYLGSAVTGAVITVPAYFNDSQRQATRDAGRIAGLEVLRILNEPTAASLAYGLDRGDTETILVFDLGGGTFDVSILEVGDGVFEVKATSGDTQLGGNDFDKKIVDWLAEQFLETEGVDLRRDRQALQRLMEAAEKAKIELSAVSITDINLPFITATEDGPKHLETRLTRSQFEGLCVDLLGRVRNPVKRALKDAGLRPDDIEEVVLVGGSTRMPMVKQLVRDLIGIEPSENVNPDEVVAMGAAIQAGILAGEFKDVLLLDVTPLSLGLEAIGGVMKKLIPRNTTIPVRRSDIFSTSENNQNSVEIHVVQGEREMAGDNKSLGRFKLYGIPPAPRGIPQIQVAFDIDANGILQVTALDRTTGREQSITIQGASTLSESEVNRMIQEAQKYADVDRERKERVEKRTRSEALILQGERQLREVALEFGMQFARNRRQRIDNISRELKESLKENDDRGIDQAYADLQDALYELNREVRQYYAEDEDDDLFATIKDIFVGDKDKERDLPRDSYRERDAYNNRDYGRDYGRDYGRDSRPSYDNSRPPRKSPRPSYQDNWDDDDDWL.

Thr-198 carries the post-translational modification Phosphothreonine; by autocatalysis. Over residues 630-661 (DLPRDSYRERDAYNNRDYGRDYGRDYGRDSRP) the composition is skewed to basic and acidic residues. The segment at 630–688 (DLPRDSYRERDAYNNRDYGRDYGRDYGRDSRPSYDNSRPPRKSPRPSYQDNWDDDDDWL) is disordered.

It belongs to the heat shock protein 70 family.

Its function is as follows. Acts as a chaperone. This Nostoc sp. (strain PCC 7120 / SAG 25.82 / UTEX 2576) protein is Chaperone protein dnaK1 (dnaK1).